The primary structure comprises 109 residues: Spermidine export protein MdtI (109 aa).

The next 4 membrane-spanning stretches (helical) occupy residues 6 to 26, 36 to 56, 64 to 84, and 88 to 108; these read WVHAAWLALAIVLEIVANVFL, IFGLLSLAAVLAAFSALSQAV, AYALWGGFGIAATLAAGWILF, and LNRKGWIGLVLLLAGMIMVKL.

The protein belongs to the drug/metabolite transporter (DMT) superfamily. Small multidrug resistance (SMR) (TC 2.A.7.1) family. MdtI subfamily. As to quaternary structure, forms a complex with MdtJ.

It localises to the cell inner membrane. Catalyzes the excretion of spermidine. This chain is Spermidine export protein MdtI, found in Escherichia coli O139:H28 (strain E24377A / ETEC).